The sequence spans 252 residues: Triosephosphate isomerase (252 aa).

9–11 (NWK) is a binding site for substrate. His-96 (electrophile) is an active-site residue. The active-site Proton acceptor is the Glu-166. Substrate-binding positions include Gly-172, Ser-212, and 233–234 (GG).

It belongs to the triosephosphate isomerase family. In terms of assembly, homodimer.

The protein localises to the cytoplasm. It carries out the reaction D-glyceraldehyde 3-phosphate = dihydroxyacetone phosphate. The protein operates within carbohydrate biosynthesis; gluconeogenesis. Its pathway is carbohydrate degradation; glycolysis; D-glyceraldehyde 3-phosphate from glycerone phosphate: step 1/1. Involved in the gluconeogenesis. Catalyzes stereospecifically the conversion of dihydroxyacetone phosphate (DHAP) to D-glyceraldehyde-3-phosphate (G3P). The chain is Triosephosphate isomerase from Prosthecochloris aestuarii (strain DSM 271 / SK 413).